A 187-amino-acid chain; its full sequence is Elongation factor P 2 (187 aa).

This sequence belongs to the elongation factor P family.

It is found in the cytoplasm. It participates in protein biosynthesis; polypeptide chain elongation. Involved in peptide bond synthesis. Stimulates efficient translation and peptide-bond synthesis on native or reconstituted 70S ribosomes in vitro. Probably functions indirectly by altering the affinity of the ribosome for aminoacyl-tRNA, thus increasing their reactivity as acceptors for peptidyl transferase. This chain is Elongation factor P 2, found in Geobacter sulfurreducens (strain ATCC 51573 / DSM 12127 / PCA).